Consider the following 153-residue polypeptide: Vasotocin-neurophysin VT 1 (153 aa).

The first 19 residues, 1-19, serve as a signal peptide directing secretion; the sequence is MPQCALLLSLLGLLALSSA. C20 and C25 are disulfide-bonded. Glycine amide is present on G28. Disulfide bonds link C41–C85, C44–C58, C52–C75, C59–C65, C92–C105, C99–C117, and C106–C111.

Belongs to the vasopressin/oxytocin family. Seven disulfide bonds are present in neurophysin.

It is found in the secreted. Functionally, vasotocin is probably an antidiuretic hormone. The polypeptide is Vasotocin-neurophysin VT 1 (Takifugu rubripes (Japanese pufferfish)).